We begin with the raw amino-acid sequence, 359 residues long: Lactosylceramide 4-alpha-galactosyltransferase (359 aa).

The Cytoplasmic portion of the chain corresponds to 1–30 (MGISCSHLEETMSKPPDCLLRMLRGTPRQR). Residues 31-51 (VFTFFIISFKFMFLISILIYW) traverse the membrane as a helical; Signal-anchor for type II membrane protein segment. Residues 52–359 (HTVGAPKDQR…TTHRAMKMYL (308 aa)) lie on the Lumenal side of the membrane. The DXD motif motif lies at 198–200 (DTD). 2 N-linked (GlcNAc...) asparagine glycosylation sites follow: N209 and N315.

The protein belongs to the glycosyltransferase 32 family.

The protein resides in the golgi apparatus membrane. It carries out the reaction a beta-D-Gal-(1-&gt;4)-beta-D-Glc-(1&lt;-&gt;1)-Cer(d18:1(4E)) + UDP-alpha-D-galactose = a globoside Gb3Cer (d18:1(4E)) + UDP + H(+). The catalysed reaction is a beta-D-Gal-(1&lt;-&gt;1')-ceramide + UDP-alpha-D-galactose = alpha-D-Gal-(1-&gt;4)-beta-D-Gal-(1&lt;-&gt;1')-Cer + UDP + H(+). Its pathway is glycolipid biosynthesis. Functionally, catalyzes the transfer of galactose from UDP-alpha-D-galactose to lactosylceramide/beta-D-galactosyl-(1-&gt;4)-beta-D-glucosyl-(1&lt;-&gt;1)-ceramide(d18:1(4E)) to produce globotriaosylceramide/globoside Gb3Cer (d18:1(4E)). Also able to transfer galactose to galactosylceramide/beta-D-Gal-(1&lt;-&gt;1')-Cer. Globoside Gb3Cer is a glycosphingolipid of the globo serie, one of the major types of neutral root structures of glycosphingolipids, that constitute a significant portion of mammalian cell membranes. This chain is Lactosylceramide 4-alpha-galactosyltransferase, found in Mus musculus (Mouse).